Consider the following 392-residue polypeptide: B2 bradykinin receptor (392 aa).

Topologically, residues 1-61 are extracellular; it reads MPCSWKLLGF…EWWSWLNAIQ (61 aa). N-linked (GlcNAc...) asparagine glycosylation is found at asparagine 29 and asparagine 40. The helical transmembrane segment at 62–85 threads the bilayer; that stretch reads APFLWVLFLLAALENLFVLSVFFL. The Cytoplasmic portion of the chain corresponds to 86–94; it reads HKNSCTVAE. A helical membrane pass occupies residues 95 to 119; sequence IYLGNLAAADLILACGLPFWAITIA. Residues 120 to 132 lie on the Extracellular side of the membrane; sequence NNFDWVFGEVLCR. Cysteine 131 and cysteine 212 form a disulfide bridge. The helical transmembrane segment at 133 to 154 threads the bilayer; sequence VVNTMIYMNLYSSICFLMLVSI. Residues 155–176 are Cytoplasmic-facing; the sequence is DRYLALVKTMSMGRMRGVRWAK. Tyrosine 157 carries the phosphotyrosine modification. A helical membrane pass occupies residues 177-199; the sequence is LYSLVIWGCTLLLSSPMLVFRTM. Over 200-222 the chain is Extracellular; it reads REYSEEGHNVTACVIVYPSRSWE. The N-linked (GlcNAc...) asparagine glycan is linked to asparagine 208. The chain crosses the membrane as a helical span at residues 223–249; the sequence is VFTNVLLNLVGFLLPLSVITFCTVRIL. At 250 to 268 the chain is on the cytoplasmic side; that stretch reads QVLRNNEMKKFKEVQTERK. A helical membrane pass occupies residues 269-293; it reads ATVLVLAVLGLFVLCWVPFQISTFL. The Extracellular portion of the chain corresponds to 294-312; it reads DTLLRLGVLSGCWDEHAVD. A helical transmembrane segment spans residues 313-336; it reads VITQISSYVAYSNSGLNPLVYVIV. Over 337–392 the chain is Cytoplasmic; sequence GKRFRKKSREVYRVLCQKGGCMGEPVQMENSMGTLRTSISVERQIHKLQDWAGKKQ. Position 348 is a phosphotyrosine (tyrosine 348). Cysteine 352 carries the S-palmitoyl cysteine lipid modification. The residue at position 367 (serine 367) is a Phosphoserine. Phosphothreonine is present on threonine 370. Residues serine 374 and serine 376 each carry the phosphoserine; by GRK6 modification.

This sequence belongs to the G-protein coupled receptor 1 family. Bradykinin receptor subfamily. BDKRB2 sub-subfamily. In terms of assembly, forms a complex with PECAM1 and GNAQ. Interacts with PECAM1.

The protein localises to the cell membrane. Receptor for bradykinin. It is associated with G proteins that activate a phosphatidylinositol-calcium second messenger system. This is B2 bradykinin receptor (Bdkrb2) from Mus musculus (Mouse).